The primary structure comprises 370 residues: Phosphoserine aminotransferase (370 aa).

An L-glutamate-binding site is contributed by R38. The pyridoxal 5'-phosphate site is built by W101, T143, D166, and Q189. K190 is subject to N6-(pyridoxal phosphate)lysine. Pyridoxal 5'-phosphate is bound at residue 243 to 244 (NT).

It belongs to the class-V pyridoxal-phosphate-dependent aminotransferase family. SerC subfamily. In terms of assembly, homodimer. Requires pyridoxal 5'-phosphate as cofactor.

Its subcellular location is the cytoplasm. It catalyses the reaction O-phospho-L-serine + 2-oxoglutarate = 3-phosphooxypyruvate + L-glutamate. It carries out the reaction 4-(phosphooxy)-L-threonine + 2-oxoglutarate = (R)-3-hydroxy-2-oxo-4-phosphooxybutanoate + L-glutamate. It participates in amino-acid biosynthesis; L-serine biosynthesis; L-serine from 3-phospho-D-glycerate: step 2/3. The protein operates within cofactor biosynthesis; pyridoxine 5'-phosphate biosynthesis; pyridoxine 5'-phosphate from D-erythrose 4-phosphate: step 3/5. Its function is as follows. Catalyzes the reversible conversion of 3-phosphohydroxypyruvate to phosphoserine and of 3-hydroxy-2-oxo-4-phosphonooxybutanoate to phosphohydroxythreonine. The chain is Phosphoserine aminotransferase from Methanosarcina mazei (strain ATCC BAA-159 / DSM 3647 / Goe1 / Go1 / JCM 11833 / OCM 88) (Methanosarcina frisia).